Here is a 319-residue protein sequence, read N- to C-terminus: MPVGKLVFNQSEPTEFVFRAFTTATEFQVLLFLLFLLLYLMILCGNTAIIWVVCTHSTLRTPMYFFLSNLSFLELCYTTVVVPLMLSNILGAQKPISLAGCGAQMFFFVTLGSTDCFLLAIMAYDRYVAICHPLHYTLIMTRELCTQMLGGALGLALFPSLQLTALIFTLPFCGHHQEINHFLCDVPPVLRLACADIRVHQAVLYVVSILVLTIPFLLICVSYVFITCAILSIRSAEGRRRAFSTCSFHLTVVLLQYGCCSLVYLRPRSSTSEDEDSQIALVYTFVTPLLNPLLYSLRNKDVKGALRSAIIRKAASDAN.

The Extracellular portion of the chain corresponds to M1–V29. Residue N9 is glycosylated (N-linked (GlcNAc...) asparagine). The helical transmembrane segment at L30–I50 threads the bilayer. At W51–T58 the chain is on the cytoplasmic side. A helical transmembrane segment spans residues L59 to T79. The Extracellular portion of the chain corresponds to V80–A103. C101 and C194 are joined by a disulfide. Residues Q104–Y124 traverse the membrane as a helical segment. Topologically, residues D125 to E143 are cytoplasmic. The helical transmembrane segment at L144–T164 threads the bilayer. Residues A165–A202 lie on the Extracellular side of the membrane. Residues V203–S222 traverse the membrane as a helical segment. Over Y223–A242 the chain is Cytoplasmic. A helical transmembrane segment spans residues F243–V263. Residues Y264–D276 lie on the Extracellular side of the membrane. The chain crosses the membrane as a helical span at residues S277–L297. Over R298–N319 the chain is Cytoplasmic.

It belongs to the G-protein coupled receptor 1 family.

It is found in the cell membrane. In terms of biological role, odorant receptor. The sequence is that of Olfactory receptor 10Q1 (OR10Q1) from Homo sapiens (Human).